Reading from the N-terminus, the 66-residue chain is Toxin NaTx-4 (66 aa).

The 64-residue stretch at 1-64 (KEGYLVNKET…TFPIPGKTCS (64 aa)) folds into the LCN-type CS-alpha/beta domain. Intrachain disulfides connect Cys-12/Cys-63, Cys-16/Cys-39, Cys-25/Cys-44, and Cys-29/Cys-46.

This sequence belongs to the long (4 C-C) scorpion toxin superfamily. Sodium channel inhibitor family. In terms of tissue distribution, expressed by the venom gland.

Its subcellular location is the secreted. In terms of biological role, probable sodium channel inhibitor. This chain is Toxin NaTx-4, found in Centruroides sculpturatus (Arizona bark scorpion).